A 723-amino-acid polypeptide reads, in one-letter code: Threonine--tRNA ligase 1, cytoplasmic (723 aa).

Polar residues predominate over residues methionine 1 to serine 10. The interval methionine 1–proline 49 is disordered. Residues methionine 13–serine 39 are compositionally biased toward basic and acidic residues. Serine 39 carries the post-translational modification Phosphoserine. Residues aspartate 79–lysine 143 form the TGS domain. Position 243 is an N6-acetyllysine (lysine 243). Residue threonine 246 is modified to Phosphothreonine. Phosphotyrosine is present on tyrosine 298. Threonine 453 is subject to Phosphothreonine. Serine 702 is modified (phosphoserine).

Belongs to the class-II aminoacyl-tRNA synthetase family. Homodimer. In terms of processing, ISGylated.

The protein localises to the cytoplasm. It carries out the reaction tRNA(Thr) + L-threonine + ATP = L-threonyl-tRNA(Thr) + AMP + diphosphate + H(+). Catalyzes the attachment of threonine to tRNA(Thr) in a two-step reaction: threonine is first activated by ATP to form Thr-AMP and then transferred to the acceptor end of tRNA(Thr). Also edits incorrectly charged tRNA(Thr) via its editing domain, at the post-transfer stage. In Bos taurus (Bovine), this protein is Threonine--tRNA ligase 1, cytoplasmic (TARS1).